We begin with the raw amino-acid sequence, 860 residues long: Leucine--tRNA ligase (860 aa).

A 'HIGH' region motif is present at residues Pro42–His52. Residues Lys619–Ser623 carry the 'KMSKS' region motif. Residue Lys622 coordinates ATP.

This sequence belongs to the class-I aminoacyl-tRNA synthetase family.

It is found in the cytoplasm. It carries out the reaction tRNA(Leu) + L-leucine + ATP = L-leucyl-tRNA(Leu) + AMP + diphosphate. This is Leucine--tRNA ligase from Shigella dysenteriae serotype 1 (strain Sd197).